The chain runs to 211 residues: Germin-like protein subfamily 3 member 3 (211 aa).

Positions 1–20 (MKMIIQIFFIISLISTISFA) are cleaved as a signal peptide. Cysteine 26 and cysteine 41 are oxidised to a cystine. Residues 55–201 (TGLGTAGNTS…TTFLSDAEVK (147 aa)) enclose the Cupin type-1 domain. Asparagine 62 is a glycosylation site (N-linked (GlcNAc...) asparagine). Mn(2+)-binding residues include histidine 103, histidine 105, and glutamate 110. Serine 140 carries the post-translational modification Phosphoserine. Mn(2+) is bound at residue histidine 149.

Belongs to the germin family. As to quaternary structure, oligomer (believed to be a pentamer but probably hexamer). As to expression, expressed in leaves and flowers.

The protein localises to the secreted. Its subcellular location is the extracellular space. The protein resides in the apoplast. Functionally, may play a role in plant defense. Probably has no oxalate oxidase activity even if the active site is conserved. This chain is Germin-like protein subfamily 3 member 3 (GER3), found in Arabidopsis thaliana (Mouse-ear cress).